Consider the following 344-residue polypeptide: Cell division protein ZipA (344 aa).

Residues 1-6 (MEDLQL) are Periplasmic-facing. Residues 7-27 (VLFVLGAIAIVAVLVHGFWSI) form a helical membrane-spanning segment. Over 28–344 (RRQQPKSLKD…DYLHRIRANA (317 aa)) the chain is Cytoplasmic. Disordered stretches follow at residues 75 to 94 (VRKA…PYLK) and 108 to 139 (QFKQ…ASRQ).

The protein belongs to the ZipA family. Interacts with FtsZ via their C-terminal domains.

The protein localises to the cell inner membrane. In terms of biological role, essential cell division protein that stabilizes the FtsZ protofilaments by cross-linking them and that serves as a cytoplasmic membrane anchor for the Z ring. Also required for the recruitment to the septal ring of downstream cell division proteins. The polypeptide is Cell division protein ZipA (Shewanella oneidensis (strain ATCC 700550 / JCM 31522 / CIP 106686 / LMG 19005 / NCIMB 14063 / MR-1)).